The sequence spans 195 residues: Meiotically up-regulated gene 84 protein (195 aa).

The Cytoplasmic segment spans residues 1–84 (MTLTHHSTFI…IMVKVPTYEY (84 aa)). A helical transmembrane segment spans residues 85-105 (YGFVMYLVSMLGFGVYIVWAL). The Lumenal portion of the chain corresponds to 106-122 (TPAPVLKFFEIHYYLSR). Residues 123–143 (WWALAIPTWLFVLVIYIHVVL) form a helical membrane-spanning segment. Over 144-195 (NAYNTEVLTKPFSSLECIVDQYALVGEEDGAAHGRVVDLRLCDVNKQQLEET) the chain is Cytoplasmic.

It localises to the endoplasmic reticulum membrane. In terms of biological role, has a role in meiosis. This chain is Meiotically up-regulated gene 84 protein (mug84), found in Schizosaccharomyces pombe (strain 972 / ATCC 24843) (Fission yeast).